A 735-amino-acid polypeptide reads, in one-letter code: Ion-translocating oxidoreductase complex subunit C (735 aa).

4Fe-4S ferredoxin-type domains are found at residues 368–397 and 407–436; these read MGAP…QQLY and KATA…VQYF. [4Fe-4S] cluster-binding residues include Cys-377, Cys-380, Cys-383, Cys-387, Cys-416, Cys-419, Cys-422, and Cys-426. The interval 534–715 is disordered; sequence QARAKQAAHP…AVDPRKAAVA (182 aa). The span at 666 to 689 shows a compositional bias: low complexity; sequence QQAGSEPAEPAAPRKAAVEAAIAR.

Belongs to the 4Fe4S bacterial-type ferredoxin family. RnfC subfamily. The complex is composed of six subunits: RsxA, RsxB, RsxC, RsxD, RsxE and RsxG. Requires [4Fe-4S] cluster as cofactor.

It is found in the cell inner membrane. Its function is as follows. Part of a membrane-bound complex that couples electron transfer with translocation of ions across the membrane. Required to maintain the reduced state of SoxR. The sequence is that of Ion-translocating oxidoreductase complex subunit C from Salmonella paratyphi B (strain ATCC BAA-1250 / SPB7).